The sequence spans 467 residues: tRNA modification GTPase MnmE (467 aa).

(6S)-5-formyl-5,6,7,8-tetrahydrofolate contacts are provided by R25, E87, and K130. A TrmE-type G domain is found at 226–389 (GLSVVLAGQP…LRGELLRIAG (164 aa)). N236 contacts K(+). Residues 236–241 (NVGKSS), 255–261 (TPIAGTT), and 280–283 (DTAG) each bind GTP. S240 is a Mg(2+) binding site. Positions 255, 257, and 260 each coordinate K(+). T261 lines the Mg(2+) pocket. K467 is a (6S)-5-formyl-5,6,7,8-tetrahydrofolate binding site.

The protein belongs to the TRAFAC class TrmE-Era-EngA-EngB-Septin-like GTPase superfamily. TrmE GTPase family. In terms of assembly, homodimer. Heterotetramer of two MnmE and two MnmG subunits. It depends on K(+) as a cofactor.

It localises to the cytoplasm. In terms of biological role, exhibits a very high intrinsic GTPase hydrolysis rate. Involved in the addition of a carboxymethylaminomethyl (cmnm) group at the wobble position (U34) of certain tRNAs, forming tRNA-cmnm(5)s(2)U34. The chain is tRNA modification GTPase MnmE from Burkholderia mallei (strain NCTC 10247).